We begin with the raw amino-acid sequence, 422 residues long: Ferrochelatase, mitochondrial (422 aa).

The transit peptide at 1–53 directs the protein to the mitochondrion; sequence MLSASANMAAALRAAGALLREPLVHGSSRACQPWRCQSGAAVAATTEKVHHAK. Lys-56 carries the N6-acetyllysine modification. 3 residues coordinate protoporphyrin IX: Arg-114, Tyr-122, and Ser-129. N6-succinyllysine is present on Lys-137. Residue Cys-195 participates in [2Fe-2S] cluster binding. The active site involves His-229. At Lys-289 the chain carries N6-acetyllysine; alternate. At Lys-289 the chain carries N6-succinyllysine; alternate. Residue Asp-382 is part of the active site. 3 residues coordinate [2Fe-2S] cluster: Cys-402, Cys-405, and Cys-410. Lys-414 bears the N6-acetyllysine; alternate mark. Position 414 is an N6-succinyllysine; alternate (Lys-414).

The protein belongs to the ferrochelatase family. Homodimer. Homotetramer. Interaction with PGRMC1; the interaction results in decreased FECH activity. Interacts with ABCB10 and SLC25A37; this interaction forms an oligomeric complex. Forms a complex with ABCB7 and ABCB10, where a dimeric FECH bridges ABCB7 and ABCB10 homodimers; this complex may be required for cellular iron homeostasis, mitochondrial function and heme biosynthesis. Interacts with ABCB7 and ABCB10. Requires [2Fe-2S] cluster as cofactor. In terms of tissue distribution, erythroid and hepatic cells.

The protein localises to the mitochondrion inner membrane. It catalyses the reaction heme b + 2 H(+) = protoporphyrin IX + Fe(2+). It functions in the pathway porphyrin-containing compound metabolism; protoheme biosynthesis; protoheme from protoporphyrin-IX: step 1/1. Functionally, catalyzes the ferrous insertion into protoporphyrin IX. The chain is Ferrochelatase, mitochondrial from Mus musculus (Mouse).